A 1121-amino-acid chain; its full sequence is Phytochrome 2 (1121 aa).

One can recognise a GAF domain in the interval 214 to 393 (DIGLLCDTVV…VFGMQLNMEV (180 aa)). Cys319 provides a ligand contact to phytochromobilin. PAS domains lie at 608-679 (VANE…SQGE) and 742-813 (DYKT…TKFM). The Histidine kinase domain maps to 893–1113 (YIRQEIKNPL…VVYVELPMAQ (221 aa)).

The protein belongs to the phytochrome family. Homodimer. Contains one covalently linked phytochromobilin chromophore.

Functionally, regulatory photoreceptor which exists in two forms that are reversibly interconvertible by light: the Pr form that absorbs maximally in the red region of the spectrum and the Pfr form that absorbs maximally in the far-red region. Photoconversion of Pr to Pfr induces an array of morphogenic responses, whereas reconversion of Pfr to Pr cancels the induction of those responses. Pfr controls the expression of a number of nuclear genes including those encoding the small subunit of ribulose-bisphosphate carboxylase, chlorophyll A/B binding protein, protochlorophyllide reductase, rRNA, etc. It also controls the expression of its own gene(s) in a negative feedback fashion. The chain is Phytochrome 2 (PHY2) from Ceratodon purpureus (Fire moss).